The sequence spans 283 residues: Protein FAM78A (283 aa).

This sequence belongs to the FAM78 family.

In Homo sapiens (Human), this protein is Protein FAM78A (FAM78A).